The sequence spans 429 residues: Tubby-like F-box protein 5 (429 aa).

An F-box domain is found at 53–108 (TRWANLPAALLRDVMKKLDESESTWPARKQVVACAGVCKTWRLMCKDIVKSPEFSG). The interval 360–385 (QPGSGSDGGALATRPSLSPQQPEQSN) is disordered. A compositionally biased stretch (polar residues) spans 374-383 (PSLSPQQPEQ).

This sequence belongs to the TUB family. In terms of tissue distribution, mostly expressed in roots, flowers and siliques.

The polypeptide is Tubby-like F-box protein 5 (Arabidopsis thaliana (Mouse-ear cress)).